The chain runs to 416 residues: Adenylosuccinate synthetase (416 aa).

Residues 13-19 (GDEGKGK) and 41-43 (GHT) each bind GTP. Catalysis depends on Asp14, which acts as the Proton acceptor. 2 residues coordinate Mg(2+): Asp14 and Gly41. Residues 14 to 17 (DEGK), 39 to 42 (NAGH), Thr126, Arg140, Gln220, Thr235, and Arg299 each bind IMP. His42 acts as the Proton donor in catalysis. 295–301 (VSTGRKR) contacts substrate. GTP-binding positions include Arg301, 327–329 (KLD), and 405–407 (STS).

It belongs to the adenylosuccinate synthetase family. In terms of assembly, homodimer. Requires Mg(2+) as cofactor.

The protein localises to the cytoplasm. It carries out the reaction IMP + L-aspartate + GTP = N(6)-(1,2-dicarboxyethyl)-AMP + GDP + phosphate + 2 H(+). The protein operates within purine metabolism; AMP biosynthesis via de novo pathway; AMP from IMP: step 1/2. Plays an important role in the de novo pathway of purine nucleotide biosynthesis. Catalyzes the first committed step in the biosynthesis of AMP from IMP. The sequence is that of Adenylosuccinate synthetase from Campylobacter jejuni subsp. jejuni serotype O:23/36 (strain 81-176).